The sequence spans 1323 residues: Nck-associated protein 5-like (1323 aa).

Disordered stretches follow at residues 1-22 (MDQPAGGTGKLRASAGEDDSME), 113-142 (QIPLTPLQPPSERPTSPAPNVSEGPATSLP), 156-175 (QQLRPGGPGPPATPPPALDA), 204-238 (PATPWRPTGQGPGSPEPINGEPCGPPQPEPSPWAP), 260-314 (PGEE…DTLL), and 341-714 (GATG…EQPE). The interval 1–135 (MDQPAGGTGK…PTSPAPNVSE (135 aa)) is mediates interaction with CDK5RAP2 and is required for homodimerization and microtubule bundle formation. Residues 22–109 (ELSTCQELLH…LQQKLQLTAN (88 aa)) adopt a coiled-coil conformation. 2 stretches are compositionally biased toward pro residues: residues 162-172 (GPGPPATPPPA) and 226-236 (CGPPQPEPSPW). Low complexity predominate over residues 271–298 (ASSRAPPSAQGPSSGPHCAPGSSSSSSS). Residues 353–364 (PGKPNSPDPGPP) are compositionally biased toward pro residues. A phosphoserine; by CDK1 mark is found at serine 436, serine 447, serine 466, and serine 473. A (S/T)X(I/L)P motif 1 motif is present at residues 480-483 (SRIP). Phosphoserine occurs at positions 489, 492, and 494. Polar residues predominate over residues 531–542 (LRPSQSTVSTAL). A Phosphoserine; by CDK1 modification is found at serine 573. Over residues 647–660 (RPGDPSHTPLRDRL) the composition is skewed to basic and acidic residues. The residue at position 654 (threonine 654) is a Phosphothreonine. The mediates interaction with beta-tubulin and is required for microtubule bundle formation stretch occupies residues 743-1136 (RVYSSHSMGA…SGTPSKNLPK (394 aa)). The residue at position 760 (serine 760) is a Phosphoserine; by CDK1. Disordered regions lie at residues 778 to 875 (ALCP…HSAI), 892 to 948 (GQER…EVKT), 979 to 1003 (AYLSRARPRPGGPATVPSPGLGQAQ), and 1027 to 1323 (KELP…GSQG). Over residues 799–817 (KPKSPHSSPTKLPSKSPTK) the composition is skewed to low complexity. The short motif at 808–811 (TKLP) is the (S/T)X(I/L)P motif 2 element. The (S/T)X(I/L)P motif 3; required for interaction with MAPRE1 signature appears at 918–921 (SKLP). A compositionally biased stretch (basic and acidic residues) spans 925-934 (RRTEATKNKD). The stretch at 942–985 (LRKEVKTEARKLEAESLNISKLMAKAEDLRRALEEEKAYLSRAR) forms a coiled coil. The segment covering 1027–1041 (KELPPKSWREPKPEY) has biased composition (basic and acidic residues). Composition is skewed to polar residues over residues 1097 to 1112 (VSTTHFTACGSLTRTL) and 1124 to 1136 (HSSSGTPSKNLPK). Positions 1143-1153 (DPPPGAPPARP) are enriched in pro residues. A Phosphoserine modification is found at serine 1184. 2 stretches are compositionally biased toward polar residues: residues 1225–1237 (TFPNTRTAGSSSD) and 1264–1273 (VDPSRTSTPQ). Positions 1302–1323 (LETSESLSDSLYDSLSSCGSQG) are enriched in low complexity.

In terms of assembly, homodimer. Interacts with CDK5RAP2. Interacts with MAPRE1. Interacts with beta-tubulin. In terms of processing, CDK1/Cyclin B-dependent phosphorylation mediates its dissociation from centrosomes during mitosis.

It localises to the cytoplasm. It is found in the cytoskeleton. The protein resides in the microtubule organizing center. Its subcellular location is the centrosome. Its function is as follows. Regulates microtubule organization and stabilization. Promotes microtubule growth and bundling formation and stabilizes microtubules by increasing intense acetylation of microtubules. Both tubulin-binding and homodimer formation are required for NCKAP5L-mediated microtubule bundle formation. This chain is Nck-associated protein 5-like (Nckap5l), found in Mus musculus (Mouse).